A 446-amino-acid polypeptide reads, in one-letter code: MTKKMRRVGKYEVGRTIGEGTFAKVKFARNTDTGDNVAIKIMAKSTILKNRMVDQIKREISIMKIVRHPNIVRLYEVLASPSKIYIVLEFVTGGELFDRIVHKGRLEESESRKYFQQLVDAVAHCHCKGVYHRDLKPENLLLDTNGNLKVSDFGLSALPQEGVELLRTTCGTPNYVAPEVLSGQGYDGSAADIWSCGVILFVILAGYLPFSETDLPGLYRKINAAEFSCPPWFSAEVKFLIHRILDPNPKTRIQIQGIKKDPWFRLNYVPIRAREEEEVNLDDIRAVFDGIEGSYVAENVERNDEGPLMMNAFEMITLSQGLNLSALFDRRQDFVKRQTRFVSRREPSEIIANIEAVANSMGFKSHTRNFKTRLEGLSSIKAGQLAVVIEIYEVAPSLFMVDVRKAAGETLEYHKFYKKLCSKLENIIWRATEGIPKSEILRTITF.

Residues 11-264 enclose the Protein kinase domain; sequence YEVGRTIGEG…IQGIKKDPWF (254 aa). Residues 17 to 25 and K40 each bind ATP; that span reads IGEGTFAKV. Catalysis depends on D134, which acts as the Proton acceptor. The tract at residues 152–179 is activation loop; that stretch reads DFGLSALPQEGVELLRTTCGTPNYVAPE. Position 156 is a phosphoserine (S156). Position 168 is a phosphothreonine (T168). The NAF domain maps to 305-329; it reads EGPLMMNAFEMITLSQGLNLSALFD. Residues 336 to 365 are PPI; sequence KRQTRFVSRREPSEIIANIEAVANSMGFKS.

The protein belongs to the protein kinase superfamily. CAMK Ser/Thr protein kinase family. SNF1 subfamily. As to quaternary structure, interacts with CBL1, CBL2, CBL4/SOS3, CBL5, CBL9, CBL10 and with the protein phosphatase 2C ABI2. Mn(2+) serves as cofactor. In terms of processing, autophosphorylated.

Its subcellular location is the cytoplasm. It is found in the nucleus. The enzyme catalyses L-seryl-[protein] + ATP = O-phospho-L-seryl-[protein] + ADP + H(+). It carries out the reaction L-threonyl-[protein] + ATP = O-phospho-L-threonyl-[protein] + ADP + H(+). Its function is as follows. Involved in the regulatory pathway for the control of intracellular Na(+) and K(+) homeostasis and salt tolerance. Activates the vacuolar H(+)/Ca(2+) antiporter CAX1 and operates in synergy with CBL4/SOS3 to activate the plasma membrane Na(+)/H(+) antiporter SOS1. CIPK serine-threonine protein kinases interact with CBL proteins. Binding of a CBL protein to the regulatory NAF domain of CIPK protein lead to the activation of the kinase in a calcium-dependent manner. Phosphorylates CBL1, CBL4 and CBL10. This is CBL-interacting serine/threonine-protein kinase 24 (CIPK24) from Arabidopsis thaliana (Mouse-ear cress).